Reading from the N-terminus, the 194-residue chain is Holliday junction branch migration complex subunit RuvA (194 aa).

The interval 1 to 63 is domain I; sequence MFEYLKGTVA…EDELSLYGFM (63 aa). The interval 64 to 142 is domain II; sequence SIEELDMFQK…KTNVVYDYTL (79 aa). The flexible linker stretch occupies residues 143–151; the sequence is FNDDHKDDD. The domain III stretch occupies residues 151–194; that stretch reads DEAVQALMALGYSKLESEKAVEAVRDMSLGTEDVIKRALKWLMK.

This sequence belongs to the RuvA family. Homotetramer. Forms an RuvA(8)-RuvB(12)-Holliday junction (HJ) complex. HJ DNA is sandwiched between 2 RuvA tetramers; dsDNA enters through RuvA and exits via RuvB. An RuvB hexamer assembles on each DNA strand where it exits the tetramer. Each RuvB hexamer is contacted by two RuvA subunits (via domain III) on 2 adjacent RuvB subunits; this complex drives branch migration. In the full resolvosome a probable DNA-RuvA(4)-RuvB(12)-RuvC(2) complex forms which resolves the HJ.

Its subcellular location is the cytoplasm. In terms of biological role, the RuvA-RuvB-RuvC complex processes Holliday junction (HJ) DNA during genetic recombination and DNA repair, while the RuvA-RuvB complex plays an important role in the rescue of blocked DNA replication forks via replication fork reversal (RFR). RuvA specifically binds to HJ cruciform DNA, conferring on it an open structure. The RuvB hexamer acts as an ATP-dependent pump, pulling dsDNA into and through the RuvAB complex. HJ branch migration allows RuvC to scan DNA until it finds its consensus sequence, where it cleaves and resolves the cruciform DNA. In Alkaliphilus oremlandii (strain OhILAs) (Clostridium oremlandii (strain OhILAs)), this protein is Holliday junction branch migration complex subunit RuvA.